Reading from the N-terminus, the 253-residue chain is Triosephosphate isomerase, cytosolic (253 aa).

Residues N10 and K12 each contribute to the substrate site. The Electrophile role is filled by H96. E166 functions as the Proton acceptor in the catalytic mechanism.

The protein belongs to the triosephosphate isomerase family. Homodimer.

It is found in the cytoplasm. The enzyme catalyses D-glyceraldehyde 3-phosphate = dihydroxyacetone phosphate. The protein operates within carbohydrate biosynthesis; gluconeogenesis. It functions in the pathway carbohydrate degradation; glycolysis; D-glyceraldehyde 3-phosphate from glycerone phosphate: step 1/1. In Zea mays (Maize), this protein is Triosephosphate isomerase, cytosolic.